A 1297-amino-acid polypeptide reads, in one-letter code: Phosphoribosylformylglycinamidine synthase (1297 aa).

ATP contacts are provided by residues 307–318 (GASTGSGGEIRD) and A678. Residues E718, N722, and D886 each coordinate Mg(2+). One can recognise a Glutamine amidotransferase type-1 domain in the interval 1044-1297 (MAILREQGVN…MFQNARKNLG (254 aa)). The Nucleophile role is filled by C1137. Catalysis depends on residues H1262 and E1264.

It in the N-terminal section; belongs to the FGAMS family. As to quaternary structure, monomer.

The protein resides in the cytoplasm. The catalysed reaction is N(2)-formyl-N(1)-(5-phospho-beta-D-ribosyl)glycinamide + L-glutamine + ATP + H2O = 2-formamido-N(1)-(5-O-phospho-beta-D-ribosyl)acetamidine + L-glutamate + ADP + phosphate + H(+). It participates in purine metabolism; IMP biosynthesis via de novo pathway; 5-amino-1-(5-phospho-D-ribosyl)imidazole from N(2)-formyl-N(1)-(5-phospho-D-ribosyl)glycinamide: step 1/2. Functionally, phosphoribosylformylglycinamidine synthase involved in the purines biosynthetic pathway. Catalyzes the ATP-dependent conversion of formylglycinamide ribonucleotide (FGAR) and glutamine to yield formylglycinamidine ribonucleotide (FGAM) and glutamate. The protein is Phosphoribosylformylglycinamidine synthase of Vibrio vulnificus (strain CMCP6).